The chain runs to 575 residues: Intermediate filament protein ifd-1 (575 aa).

Residues 1 to 56 (MSKLNPRVAHNPVLSRIIESGRTNLPSGITSAGSLSAYAQAAAVTIRDNRDREKRE) form a head region. Residues 53–406 (EKREIADLNN…KLMEQAENLR (354 aa)) form the IF rod domain. A coil 1A region spans residues 57–88 (IADLNNRLARYVEKVRFLEAQNRVLENDIGLF). The interval 89 to 102 (RQAAHIHTGKVRDY) is linker 1. The interval 103–240 (YDAEKTSLAT…STHEIAIREE (138 aa)) is coil 1B. The segment at 241 to 258 (INKARRDSTDKNREFFHR) is linker 12. A coil 2 region spans residues 259–408 (ELHMSMKEIR…MEQAENLRTS (150 aa)). The tract at residues 409–572 (YQSDFVIDTP…DEVGWYAHVS (164 aa)) is tail. Positions 459-575 (NTQQFRSYGK…GWYAHVSYSH (117 aa)) constitute an LTD domain.

This sequence belongs to the intermediate filament family.

Its subcellular location is the cytoplasm. In terms of biological role, cytoplasmic intermediate filaments provide mechanical strength to cells. Not essential protein. The protein is Intermediate filament protein ifd-1 of Caenorhabditis elegans.